A 412-amino-acid polypeptide reads, in one-letter code: Serine hydroxymethyltransferase (412 aa).

Residues L114 and 118–120 (GHL) each bind (6S)-5,6,7,8-tetrahydrofolate. Residue K223 is modified to N6-(pyridoxal phosphate)lysine.

The protein belongs to the SHMT family. In terms of assembly, homodimer. The cofactor is pyridoxal 5'-phosphate.

The protein resides in the cytoplasm. It carries out the reaction (6R)-5,10-methylene-5,6,7,8-tetrahydrofolate + glycine + H2O = (6S)-5,6,7,8-tetrahydrofolate + L-serine. The protein operates within one-carbon metabolism; tetrahydrofolate interconversion. It participates in amino-acid biosynthesis; glycine biosynthesis; glycine from L-serine: step 1/1. Catalyzes the reversible interconversion of serine and glycine with tetrahydrofolate (THF) serving as the one-carbon carrier. This reaction serves as the major source of one-carbon groups required for the biosynthesis of purines, thymidylate, methionine, and other important biomolecules. Also exhibits THF-independent aldolase activity toward beta-hydroxyamino acids, producing glycine and aldehydes, via a retro-aldol mechanism. The sequence is that of Serine hydroxymethyltransferase from Mesoplasma florum (strain ATCC 33453 / NBRC 100688 / NCTC 11704 / L1) (Acholeplasma florum).